Consider the following 819-residue polypeptide: Disintegrin and metalloproteinase domain-containing protein 9 (819 aa).

Residues 1–28 (MGSGARFPSGTLRVRWLLLLGLVGPVLG) form the signal peptide. At 29–697 (AARPGFQQTS…YNEMNTALRD (669 aa)) the chain is on the extracellular side. Asparagine 125, asparagine 144, asparagine 154, and asparagine 231 each carry an N-linked (GlcNAc...) asparagine glycan. A Peptidase M12B domain is found at 212 to 406 (RYVELFIVVD…KGGNCLLNIP (195 aa)). Cystine bridges form between cysteine 322–cysteine 401, cysteine 363–cysteine 385, cysteine 365–cysteine 370, cysteine 473–cysteine 493, cysteine 644–cysteine 656, cysteine 650–cysteine 662, and cysteine 664–cysteine 673. Histidine 347 lines the Zn(2+) pocket. Residue glutamate 348 is part of the active site. Positions 351 and 357 each coordinate Zn(2+). N-linked (GlcNAc...) asparagine glycosylation is found at asparagine 381 and asparagine 487. The Disintegrin domain occupies 414–501 (APSCGNKLVD…FCQPDVFIQN (88 aa)). Residues 644-698 (CDVQKKCHGHGVCNSNKNCHCENGWAPPNCETKGYGGSVDSGPTYNEMNTALRDG) enclose the EGF-like domain. The chain crosses the membrane as a helical span at residues 698–718 (GLLVFFFLIVPLIVCAIFIFI). Topologically, residues 719 to 819 (KRDQLWRSYF…PAPPLYSSLT (101 aa)) are cytoplasmic. Disordered regions lie at residues 734-763 (QTYESDGKNQANPSRQPGSVPRHVSPVTPP) and 780-819 (AKQPQQFPSRPPPPQPKVSSQGNLIPARPAPAPPLYSSLT). The segment covering 735–750 (TYESDGKNQANPSRQP) has biased composition (polar residues). Phosphoserine is present on serine 758. Threonine 761 bears the Phosphothreonine mark.

As to quaternary structure, interacts with SH3GL2 and SNX9 through its cytoplasmic tail. Interacts with ITGA6. Requires Zn(2+) as cofactor. In terms of processing, proteolytically cleaved in the trans-Golgi network before it reaches the plasma membrane to generate a mature protein. The removal of the pro-domain occurs via cleavage at two different sites. Processed most likely by a pro-protein convertase such as furin, at the boundary between the pro-domain and the catalytic domain. An additional upstream cleavage pro-protein convertase site (Arg-56/Glu-57) has an important role in the activation of ADAM9. Post-translationally, phosphorylation is induced in vitro by phorbol-12-myristate-13-acetate (PMA). Widely expressed. Expressed in chondrocytes. Isoform 2 is highly expressed in liver and heart.

The protein resides in the cell membrane. It localises to the secreted. Synthesized as an inactive form which is proteolytically cleaved to generate an active enzyme. Processing at the upstream site is particularly important for activation of the proenzyme, whereas processing at the boundary between the pro-domain and the catalytic domain does not appear to be essential. Inhibited by hydroxamic acid-based inhibitors. Metalloprotease that cleaves and releases a number of molecules with important roles in tumorigenesis and angiogenesis, such as TEK, KDR, EPHB4, CD40, VCAM1 and CDH5. May mediate cell-cell, cell-matrix interactions and regulate the motility of cells via interactions with integrins. Functionally, may act as alpha-secretase for amyloid precursor protein (APP). This Homo sapiens (Human) protein is Disintegrin and metalloproteinase domain-containing protein 9 (ADAM9).